The primary structure comprises 183 residues: Apo-citrate lyase phosphoribosyl-dephospho-CoA transferase (183 aa).

It belongs to the CitX family.

The enzyme catalyses apo-[citrate lyase ACP] + 2'-(5''-triphospho-alpha-D-ribosyl)-3'-dephospho-CoA = holo-[citrate lyase ACP] + diphosphate. Transfers 2-(5''-triphosphoribosyl)-3'-dephosphocoenzyme-A on a serine residue to the apo-acyl carrier protein (gamma chain) of the citrate lyase to yield holo-acyl carrier protein. The polypeptide is Apo-citrate lyase phosphoribosyl-dephospho-CoA transferase (Escherichia coli (strain SMS-3-5 / SECEC)).